The following is a 503-amino-acid chain: Aspartyl/glutamyl-tRNA(Asn/Gln) amidotransferase subunit B (503 aa).

Belongs to the GatB/GatE family. GatB subfamily. Heterotrimer of A, B and C subunits.

The enzyme catalyses L-glutamyl-tRNA(Gln) + L-glutamine + ATP + H2O = L-glutaminyl-tRNA(Gln) + L-glutamate + ADP + phosphate + H(+). It carries out the reaction L-aspartyl-tRNA(Asn) + L-glutamine + ATP + H2O = L-asparaginyl-tRNA(Asn) + L-glutamate + ADP + phosphate + 2 H(+). Its function is as follows. Allows the formation of correctly charged Asn-tRNA(Asn) or Gln-tRNA(Gln) through the transamidation of misacylated Asp-tRNA(Asn) or Glu-tRNA(Gln) in organisms which lack either or both of asparaginyl-tRNA or glutaminyl-tRNA synthetases. The reaction takes place in the presence of glutamine and ATP through an activated phospho-Asp-tRNA(Asn) or phospho-Glu-tRNA(Gln). The polypeptide is Aspartyl/glutamyl-tRNA(Asn/Gln) amidotransferase subunit B (Cereibacter sphaeroides (strain ATCC 17025 / ATH 2.4.3) (Rhodobacter sphaeroides)).